A 605-amino-acid polypeptide reads, in one-letter code: Leucine aminopeptidase (605 aa).

A peptide contacts are provided by K374, D379, and K386. K374 and D379 together coordinate Zn(2+). Residues 384–401 (NLKAAPGSMIDLMKFDMS) form an L13 loop region. Residue K386 is part of the active site. The Zn(2+) site is built by D394, M396, D399, D459, and E461. A peptide contacts are provided by D399 and D459. The active site involves R463.

Belongs to the peptidase M17 family. In terms of assembly, homohexamer composed of dimer of trimers. Both the identity and concentration of metal ions available dictate the extent to which oligomerization occurs; Mn(2+) and Co(2+) induces oligomerization, whereas Mg(2+) has no effect, and Zn(2+) causes irreversible protein aggregation in vitro. Zn(2+) is required as a cofactor.

The protein localises to the cytoplasm. The catalysed reaction is Release of an N-terminal amino acid, Xaa-|-Yaa-, in which Xaa is preferably Leu, but may be other amino acids including Pro although not Arg or Lys, and Yaa may be Pro. Amino acid amides and methyl esters are also readily hydrolyzed, but rates on arylamides are exceedingly low.. It carries out the reaction L-cysteinylglycine + H2O = L-cysteine + glycine. Its activity is regulated as follows. Oligomerization is required for catalytic activity and is metal-dependent. The type of metal that binds the 2 metal binding sites influences catalytic activity and substrate specificity. In vitro, activated by Co(2+), Mn(2+), Ni(2+), Mg(2+) and Zn(2+) with decreasing strength. Occupancy of the site 2 is essential and sufficient for activating the enzyme but occupation of the 2 sites is necessary for full catalytic activity. Inhibited by fungal metabolite bestatin. Inhibited by Phe-Naphthyl (PNAP). In terms of biological role, aminopeptidase which preferentially cleaves leucine residues from the N-terminus of peptides. Also, has some activity towards tryptophan and methionine and to a lesser extent towards phenylalanine. Has very low activity or no activity towards the other amino acids. In addition, cleaves the Cys-Gly dipeptide, probably as part of the glutathione regulation pathway; cleavage only occurs in the presence of Mn(2+). During the asexual blood stage, plays a role in the final step of host hemoglobin catabolism, by cleaving hemoglobin-derived oligopeptides providing a source of amino acids for the parasite protein synthesis and for the maintenance of osmotic homeostasis. During the asexual blood stage, may also play a role during the ring-trophozoite transition. This is Leucine aminopeptidase from Plasmodium falciparum (isolate 3D7).